The chain runs to 350 residues: Phosphate acyltransferase (350 aa).

It belongs to the PlsX family. Homodimer. Probably interacts with PlsY.

It localises to the cytoplasm. The catalysed reaction is a fatty acyl-[ACP] + phosphate = an acyl phosphate + holo-[ACP]. It functions in the pathway lipid metabolism; phospholipid metabolism. Its function is as follows. Catalyzes the reversible formation of acyl-phosphate (acyl-PO(4)) from acyl-[acyl-carrier-protein] (acyl-ACP). This enzyme utilizes acyl-ACP as fatty acyl donor, but not acyl-CoA. The sequence is that of Phosphate acyltransferase from Phenylobacterium zucineum (strain HLK1).